The following is a 576-amino-acid chain: Carboxypeptidase S (576 aa).

The Cytoplasmic segment spans residues 1–19 (MIALPVEKAPRKSLWQRHR). A Glycyl lysine isopeptide (Lys-Gly) (interchain with G-Cter in ubiquitin) cross-link involves residue lysine 8. Residues 20-40 (AFISGIVALIIIGTFFLTSGL) form a helical membrane-spanning segment. Residues 41–576 (HPAPPHEAKR…EYIVNVNEYA (536 aa)) lie on the Lumenal side of the membrane. Positions 44–65 (PPHEAKRPHHGKGPMHSPKCEK) are disordered. Asparagine 88 carries N-linked (GlcNAc...) asparagine glycosylation. Residue histidine 168 participates in Zn(2+) binding. Aspartate 170 is a catalytic residue. N-linked (GlcNAc...) asparagine glycosylation occurs at asparagine 176. Aspartate 205 provides a ligand contact to Zn(2+). Residue asparagine 228 is glycosylated (N-linked (GlcNAc...) asparagine). Glutamate 239 (proton acceptor) is an active-site residue. The Zn(2+) site is built by glutamate 240 and aspartate 268. 2 N-linked (GlcNAc...) asparagine glycosylation sites follow: asparagine 381 and asparagine 525. Residue histidine 547 coordinates Zn(2+).

It belongs to the peptidase M20A family. In terms of assembly, yscS is synthesized as one polypeptide chain precursor which after carbohydrate modification in the secretory pathway yields two active precursor molecules. The proteolytically unprocessed forms are associated with the membrane, whereas the mature forms of the enzyme are soluble. Zn(2+) serves as cofactor. Post-translationally, glycosylated. In terms of processing, ubiquitinated. Ubiquitination mediates sorting into internal vesicles in late endosomes. TUL1 is required for ubiquitination.

The protein resides in the vacuole membrane. The enzyme catalyses Release of a C-terminal amino acid from a peptide in which glycine is the penultimate amino acid, e.g. Z-Gly-|-Leu.. Its function is as follows. Necessary for use of certain peptides as sole nitrogen source. May also cleave intracellularly generated peptides to recycle amino acids for protein synthesis. This chain is Carboxypeptidase S (CPS1), found in Saccharomyces cerevisiae (strain ATCC 204508 / S288c) (Baker's yeast).